The primary structure comprises 505 residues: Lysine--tRNA ligase (505 aa).

Positions 1–11 (MSDQQLDQPSL) are enriched in polar residues. The tract at residues 1–23 (MSDQQLDQPSLSHEERQHEENKL) is disordered. The span at 12–23 (SHEERQHEENKL) shows a compositional bias: basic and acidic residues. Mg(2+)-binding residues include glutamate 415 and glutamate 422.

This sequence belongs to the class-II aminoacyl-tRNA synthetase family. In terms of assembly, homodimer. Mg(2+) is required as a cofactor.

It localises to the cytoplasm. The enzyme catalyses tRNA(Lys) + L-lysine + ATP = L-lysyl-tRNA(Lys) + AMP + diphosphate. The sequence is that of Lysine--tRNA ligase from Ectopseudomonas mendocina (strain ymp) (Pseudomonas mendocina).